A 253-amino-acid polypeptide reads, in one-letter code: tRNA-cytidine(32) 2-sulfurtransferase 2 (253 aa).

Positions 33–38 (SGGKDS) match the PP-loop motif motif. The [4Fe-4S] cluster site is built by Cys-108, Cys-111, and Cys-199.

This sequence belongs to the TtcA family. Homodimer. The cofactor is Mg(2+). It depends on [4Fe-4S] cluster as a cofactor.

Its subcellular location is the cytoplasm. It catalyses the reaction cytidine(32) in tRNA + S-sulfanyl-L-cysteinyl-[cysteine desulfurase] + AH2 + ATP = 2-thiocytidine(32) in tRNA + L-cysteinyl-[cysteine desulfurase] + A + AMP + diphosphate + H(+). It functions in the pathway tRNA modification. In terms of biological role, catalyzes the ATP-dependent 2-thiolation of cytidine in position 32 of tRNA, to form 2-thiocytidine (s(2)C32). The sulfur atoms are provided by the cysteine/cysteine desulfurase (IscS) system. The polypeptide is tRNA-cytidine(32) 2-sulfurtransferase 2 (Francisella tularensis subsp. novicida (strain U112)).